We begin with the raw amino-acid sequence, 156 residues long: Putative NrdI-like protein (156 aa).

This is Putative NrdI-like protein from Streptococcus pneumoniae (strain ATCC BAA-255 / R6).